Reading from the N-terminus, the 644-residue chain is Threonine--tRNA ligase (644 aa).

The 61-residue stretch at 1–61 folds into the TGS domain; the sequence is MVAITLPDGS…VADAKVEIVT (61 aa). A catalytic region spans residues 242–533; sequence DHRKIGKALN…LIENYAGWMP (292 aa). Zn(2+) contacts are provided by cysteine 333, histidine 384, and histidine 510.

The protein belongs to the class-II aminoacyl-tRNA synthetase family. As to quaternary structure, homodimer. Zn(2+) serves as cofactor.

Its subcellular location is the cytoplasm. The enzyme catalyses tRNA(Thr) + L-threonine + ATP = L-threonyl-tRNA(Thr) + AMP + diphosphate + H(+). Its function is as follows. Catalyzes the attachment of threonine to tRNA(Thr) in a two-step reaction: L-threonine is first activated by ATP to form Thr-AMP and then transferred to the acceptor end of tRNA(Thr). Also edits incorrectly charged L-seryl-tRNA(Thr). This chain is Threonine--tRNA ligase, found in Psychrobacter arcticus (strain DSM 17307 / VKM B-2377 / 273-4).